Reading from the N-terminus, the 242-residue chain is MSRDEIYRQSQSFLDDFGFGESVATVFDDMLERSVPFYAELQRMIAEMAGDFAMPHTRIYDFGCSTGTTLIGLDQAIGPRGLTLVGVDNSQEMLAKCRAKMAGHAFANAVELIRADLNQGVVMENASLALMILTLQFVRPLYRDRLVRAIHDGLEENGALVLVEKVLGESSLFNRSFIKYYYEFKKRNGYTELEIAQKREALENVLVPYKLAENLEMLESAGFRYVDVFFKWYNFVGIVAVK.

S-adenosyl-L-methionine contacts are provided by residues tyrosine 38, 63 to 65 (GCS), 88 to 89 (DN), 116 to 117 (DL), and arginine 199.

This sequence belongs to the class I-like SAM-binding methyltransferase superfamily. Cx-SAM synthase family. In terms of assembly, homodimer.

It catalyses the reaction prephenate + S-adenosyl-L-methionine = carboxy-S-adenosyl-L-methionine + 3-phenylpyruvate + H2O. Its function is as follows. Catalyzes the conversion of S-adenosyl-L-methionine (SAM) to carboxy-S-adenosyl-L-methionine (Cx-SAM). This chain is Carboxy-S-adenosyl-L-methionine synthase, found in Methylococcus capsulatus (strain ATCC 33009 / NCIMB 11132 / Bath).